Consider the following 308-residue polypeptide: Prephenate dehydratase (308 aa).

One can recognise a Prephenate dehydratase domain in the interval 3-187 (RITYLGPEGT…AHTRFVLVGR (185 aa)). The ACT domain maps to 201–278 (SVVLGLGNVP…EDVRYLGSWP (78 aa)).

As to quaternary structure, homodimer.

It carries out the reaction prephenate + H(+) = 3-phenylpyruvate + CO2 + H2O. It participates in amino-acid biosynthesis; L-phenylalanine biosynthesis; phenylpyruvate from prephenate: step 1/1. This Mycobacteroides abscessus (strain ATCC 19977 / DSM 44196 / CCUG 20993 / CIP 104536 / JCM 13569 / NCTC 13031 / TMC 1543 / L948) (Mycobacterium abscessus) protein is Prephenate dehydratase (pheA).